The following is a 384-amino-acid chain: S-adenosylmethionine synthase (384 aa).

ATP is bound at residue His-15. Residue Asp-17 participates in Mg(2+) binding. Glu-43 is a binding site for K(+). Residues Glu-56 and Gln-99 each coordinate L-methionine. The flexible loop stretch occupies residues 99 to 109 (QSADINQGVDR). ATP-binding positions include 164 to 166 (DAK), 230 to 231 (RF), Asp-239, 245 to 246 (RK), Ala-262, and Lys-266. Asp-239 serves as a coordination point for L-methionine. Position 270 (Lys-270) interacts with L-methionine.

This sequence belongs to the AdoMet synthase family. In terms of assembly, homotetramer; dimer of dimers. Mg(2+) is required as a cofactor. K(+) serves as cofactor.

The protein resides in the cytoplasm. The enzyme catalyses L-methionine + ATP + H2O = S-adenosyl-L-methionine + phosphate + diphosphate. The protein operates within amino-acid biosynthesis; S-adenosyl-L-methionine biosynthesis; S-adenosyl-L-methionine from L-methionine: step 1/1. In terms of biological role, catalyzes the formation of S-adenosylmethionine (AdoMet) from methionine and ATP. The overall synthetic reaction is composed of two sequential steps, AdoMet formation and the subsequent tripolyphosphate hydrolysis which occurs prior to release of AdoMet from the enzyme. The protein is S-adenosylmethionine synthase of Haemophilus influenzae (strain ATCC 51907 / DSM 11121 / KW20 / Rd).